The chain runs to 37 residues: MKVRASVKRMCDKCRVIRRHGRVMVICANPKHKQRQG.

This sequence belongs to the bacterial ribosomal protein bL36 family.

This chain is Large ribosomal subunit protein bL36, found in Synechococcus sp. (strain RCC307).